The chain runs to 111 residues: ATP-dependent Clp protease adapter protein ClpS (111 aa).

Belongs to the ClpS family. As to quaternary structure, binds to the N-terminal domain of the chaperone ClpA.

Its function is as follows. Involved in the modulation of the specificity of the ClpAP-mediated ATP-dependent protein degradation. This is ATP-dependent Clp protease adapter protein ClpS from Leptospira interrogans serogroup Icterohaemorrhagiae serovar copenhageni (strain Fiocruz L1-130).